A 71-amino-acid chain; its full sequence is uncharacterized protein (71 aa).

The span at 20 to 32 (SSGRRQLTATQPR) shows a compositional bias: polar residues. Residues 20–46 (SSGRRQLTATQPRSDPESQRGRTSSNR) are disordered.

This is an uncharacterized protein from Rhizobium leguminosarum.